A 166-amino-acid polypeptide reads, in one-letter code: CDP-archaeol synthase (166 aa).

Transmembrane regions (helical) follow at residues 7-27, 55-75, 78-98, 116-136, and 138-158; these read LLLS…GPFI, LIVA…FFTA, TLIS…GAFI, LDFV…ITWY, and FLFI…VAYL.

The protein belongs to the CDP-archaeol synthase family. Mg(2+) serves as cofactor.

It localises to the cell membrane. It carries out the reaction 2,3-bis-O-(geranylgeranyl)-sn-glycerol 1-phosphate + CTP + H(+) = CDP-2,3-bis-O-(geranylgeranyl)-sn-glycerol + diphosphate. It participates in membrane lipid metabolism; glycerophospholipid metabolism. Functionally, catalyzes the formation of CDP-2,3-bis-(O-geranylgeranyl)-sn-glycerol (CDP-archaeol) from 2,3-bis-(O-geranylgeranyl)-sn-glycerol 1-phosphate (DGGGP) and CTP. This reaction is the third ether-bond-formation step in the biosynthesis of archaeal membrane lipids. In Saccharolobus islandicus (strain L.S.2.15 / Lassen #1) (Sulfolobus islandicus), this protein is CDP-archaeol synthase.